A 376-amino-acid chain; its full sequence is Copper-containing nitrite reductase (376 aa).

The tat-type signal signal peptide spans 1–33 (MSEQFQMTRRSMLAGAAIAGAVTPLIGAVSAHA). 2 Plastocyanin-like domains span residues 98 to 193 (MTFN…IMVL) and 258 to 359 (GAVG…FAVT). Positions 131, 136, 171, 172, 181, 186, and 342 each coordinate Cu cation.

The protein belongs to the multicopper oxidase family. In terms of assembly, homotrimer. The cofactor is Cu(2+). Cu(+) serves as cofactor. Requires FAD as cofactor. Post-translationally, predicted to be exported by the Tat system. The position of the signal peptide cleavage has not been experimentally proven.

It is found in the periplasm. It carries out the reaction nitric oxide + Fe(III)-[cytochrome c] + H2O = Fe(II)-[cytochrome c] + nitrite + 2 H(+). It participates in nitrogen metabolism; nitrate reduction (denitrification); dinitrogen from nitrate: step 2/4. This chain is Copper-containing nitrite reductase (nirK), found in Rhizobium meliloti (strain 1021) (Ensifer meliloti).